The primary structure comprises 481 residues: Probable cytosol aminopeptidase (481 aa).

Residues K247 and D252 each contribute to the Mn(2+) site. Residue K259 is part of the active site. Residues D270, D329, and E331 each coordinate Mn(2+). R333 is an active-site residue.

The protein belongs to the peptidase M17 family. Requires Mn(2+) as cofactor.

The protein resides in the cytoplasm. It carries out the reaction Release of an N-terminal amino acid, Xaa-|-Yaa-, in which Xaa is preferably Leu, but may be other amino acids including Pro although not Arg or Lys, and Yaa may be Pro. Amino acid amides and methyl esters are also readily hydrolyzed, but rates on arylamides are exceedingly low.. The catalysed reaction is Release of an N-terminal amino acid, preferentially leucine, but not glutamic or aspartic acids.. Functionally, presumably involved in the processing and regular turnover of intracellular proteins. Catalyzes the removal of unsubstituted N-terminal amino acids from various peptides. This is Probable cytosol aminopeptidase from Clostridium tetani (strain Massachusetts / E88).